We begin with the raw amino-acid sequence, 485 residues long: Sphingosine kinase 1 (485 aa).

Positions 116-258 (GRPKKLLVFV…LDVATISQGT (143 aa)) constitute a DAGKc domain. Residues 126 to 128 (NPF) and Thr-158 contribute to the ATP site. 183 to 186 (SGDG) contacts substrate. Asp-185 serves as the catalytic Proton donor/acceptor. ATP contacts are provided by residues Glu-190 and 215-217 (GSG). Position 276 (Asp-276) interacts with substrate. Residues Arg-283, Arg-289, and 446-448 (DGE) each bind ATP.

The cofactor is Mg(2+). As to expression, highly expressed in stems and flowers and at lower levels in roots, leaves and siliques.

The protein resides in the vacuole membrane. It carries out the reaction a sphingoid base + ATP = a sphingoid 1-phosphate + ADP + H(+). Activated by phosphatidic acid (PA). Binding with PA stimulates the activity by promoting the binding of substrate to the catalytic site. Functionally, involved in the production of sphingolipid metabolites. Phosphorylates sphingosine and various sphingoid long-chain base (LCB) products, such as phytosphingosine (PHS, 4-hydroxysphinganine), 4-hydroxy-8-sphingenine, 4,8-sphingadienine, D-erythro-dihydrosphingosine and D,L-threo-dihydrosphingosine. Is required for abscisic acid (ABA) signaling that mediates stomatal closure, inhibition of seed germination and root elongation. May function upstream of PLDALPHA1 and phosphatidic acid (PA) in an amplification response to ABA that mediates stomatal closure. The sequence is that of Sphingosine kinase 1 (SPHK1) from Arabidopsis thaliana (Mouse-ear cress).